A 183-amino-acid polypeptide reads, in one-letter code: Peptidyl-tRNA hydrolase (183 aa).

Tyrosine 14 lines the tRNA pocket. Histidine 19 functions as the Proton acceptor in the catalytic mechanism. Residues tyrosine 61, asparagine 63, and asparagine 109 each contribute to the tRNA site.

Belongs to the PTH family. In terms of assembly, monomer.

The protein localises to the cytoplasm. It carries out the reaction an N-acyl-L-alpha-aminoacyl-tRNA + H2O = an N-acyl-L-amino acid + a tRNA + H(+). Functionally, hydrolyzes ribosome-free peptidyl-tRNAs (with 1 or more amino acids incorporated), which drop off the ribosome during protein synthesis, or as a result of ribosome stalling. Its function is as follows. Catalyzes the release of premature peptidyl moieties from peptidyl-tRNA molecules trapped in stalled 50S ribosomal subunits, and thus maintains levels of free tRNAs and 50S ribosomes. This chain is Peptidyl-tRNA hydrolase, found in Aliarcobacter butzleri (strain RM4018) (Arcobacter butzleri).